The primary structure comprises 365 residues: 2-aminoethylphosphonate--pyruvate transaminase (365 aa).

Lysine 194 carries the N6-(pyridoxal phosphate)lysine modification.

It belongs to the class-V pyridoxal-phosphate-dependent aminotransferase family. PhnW subfamily. In terms of assembly, homodimer. Pyridoxal 5'-phosphate is required as a cofactor.

It catalyses the reaction (2-aminoethyl)phosphonate + pyruvate = phosphonoacetaldehyde + L-alanine. Functionally, involved in phosphonate degradation. In Bacillus cereus (strain AH187), this protein is 2-aminoethylphosphonate--pyruvate transaminase.